The sequence spans 563 residues: Mitochondrial distribution and morphology protein 34 (563 aa).

In terms of domain architecture, SMP-LTD spans 1–195 (MAFNFNWSPL…LPAIIHRLSL (195 aa)). Disordered stretches follow at residues 298–499 (ERGD…PHTP) and 531–563 (ARRQ…PKAL). 2 stretches are compositionally biased toward polar residues: residues 303 to 332 (AGTT…FSNR) and 346 to 357 (SLVNMNSATTGL). The segment covering 365-383 (SRSHPTRKKKNRVVNLRKP) has biased composition (basic residues). Residues 386–407 (TESSESGESETASTTAVSEPTV) show a composition bias toward low complexity. Composition is skewed to polar residues over residues 458–471 (PSLT…INTQ) and 478–488 (YNQSASTSYTP). Basic and acidic residues predominate over residues 531–540 (ARRQHDDKTA).

It belongs to the MDM34 family. As to quaternary structure, component of the ER-mitochondria encounter structure (ERMES) or MDM complex, composed of MMM1, MDM10, MDM12 and MDM34.

It localises to the mitochondrion outer membrane. In terms of biological role, component of the ERMES/MDM complex, which serves as a molecular tether to connect the endoplasmic reticulum (ER) and mitochondria. Components of this complex are involved in the control of mitochondrial shape and protein biogenesis, and function in nonvesicular lipid trafficking between the ER and mitochondria. MDM34 is required for the interaction of the ER-resident membrane protein MMM1 and the outer mitochondrial membrane-resident beta-barrel protein MDM10. This is Mitochondrial distribution and morphology protein 34 from Botryotinia fuckeliana (strain B05.10) (Noble rot fungus).